The primary structure comprises 156 residues: Regulatory protein RecX (156 aa).

The protein belongs to the RecX family.

The protein resides in the cytoplasm. Modulates RecA activity. The chain is Regulatory protein RecX from Pseudomonas putida (strain GB-1).